The primary structure comprises 253 residues: Adenosylcobinamide-GDP ribazoletransferase (253 aa).

Helical transmembrane passes span 33–53 (ISPL…YVLL), 106–126 (IGSG…VALL), 132–152 (FYTI…GLYI), and 178–198 (VLLL…FLVF).

It belongs to the CobS family. The cofactor is Mg(2+).

Its subcellular location is the cell membrane. It catalyses the reaction alpha-ribazole + adenosylcob(III)inamide-GDP = adenosylcob(III)alamin + GMP + H(+). It carries out the reaction alpha-ribazole 5'-phosphate + adenosylcob(III)inamide-GDP = adenosylcob(III)alamin 5'-phosphate + GMP + H(+). It participates in cofactor biosynthesis; adenosylcobalamin biosynthesis; adenosylcobalamin from cob(II)yrinate a,c-diamide: step 7/7. Joins adenosylcobinamide-GDP and alpha-ribazole to generate adenosylcobalamin (Ado-cobalamin). Also synthesizes adenosylcobalamin 5'-phosphate from adenosylcobinamide-GDP and alpha-ribazole 5'-phosphate. The polypeptide is Adenosylcobinamide-GDP ribazoletransferase (Saccharolobus islandicus (strain Y.G.57.14 / Yellowstone #1) (Sulfolobus islandicus)).